Consider the following 165-residue polypeptide: Nucleotide-binding protein Chy400_2003 (165 aa).

The protein belongs to the YajQ family.

In terms of biological role, nucleotide-binding protein. This is Nucleotide-binding protein Chy400_2003 from Chloroflexus aurantiacus (strain ATCC 29364 / DSM 637 / Y-400-fl).